The following is a 291-amino-acid chain: Ribonuclease Z (291 aa).

Residues His61, His63, Asp65, His66, His133, Asp201, and His257 each coordinate Zn(2+). Asp65 functions as the Proton acceptor in the catalytic mechanism.

This sequence belongs to the RNase Z family. In terms of assembly, homodimer. It depends on Zn(2+) as a cofactor.

The catalysed reaction is Endonucleolytic cleavage of RNA, removing extra 3' nucleotides from tRNA precursor, generating 3' termini of tRNAs. A 3'-hydroxy group is left at the tRNA terminus and a 5'-phosphoryl group is left at the trailer molecule.. In terms of biological role, zinc phosphodiesterase, which displays some tRNA 3'-processing endonuclease activity. Probably involved in tRNA maturation, by removing a 3'-trailer from precursor tRNA. This is Ribonuclease Z from Saccharolobus islandicus (strain M.16.27) (Sulfolobus islandicus).